A 446-amino-acid polypeptide reads, in one-letter code: Scytalone dehydratase-like protein Arp1 (446 aa).

A substrate-binding site is contributed by tyrosine 323. Residues histidine 358 and histidine 383 contribute to the active site. Position 404 (asparagine 404) interacts with substrate.

The protein belongs to the scytalone dehydratase family. As to quaternary structure, homotrimer. Each subunit contains an active site, located in the central part of the hydrophobic core of the monomer, which functions independently.

Functionally, scytalone dehydratase-like protein; part of the Pks2 gene cluster that mediates the formation of infectious structures (appressoria), enabling these fungi to kill insects faster. The product of the Pks2 gene cluster is different from the one of Pks1 and has still not been identified. In Metarhizium acridum (strain CQMa 102), this protein is Scytalone dehydratase-like protein Arp1.